Consider the following 399-residue polypeptide: L-methionine gamma-lyase (399 aa).

Pyridoxal 5'-phosphate-binding positions include 59–61 (YTR) and 89–90 (GM). Substrate is bound at residue tyrosine 114. 209–211 (SAT) lines the pyridoxal 5'-phosphate pocket. Lysine 212 is subject to N6-(pyridoxal phosphate)lysine. Substrate is bound at residue arginine 376.

This sequence belongs to the trans-sulfuration enzymes family. L-methionine gamma-lyase subfamily. As to quaternary structure, homotetramer; dimer of active dimers. The cofactor is pyridoxal 5'-phosphate.

It catalyses the reaction L-methionine + H2O = methanethiol + 2-oxobutanoate + NH4(+). Catalyzes the alpha,gamma-elimination of L-methionine to produce methanethiol, 2-oxobutanoate and ammonia. The polypeptide is L-methionine gamma-lyase (Pseudomonas deceptionensis).